Reading from the N-terminus, the 109-residue chain is Prefoldin subunit 1 (109 aa).

Serine 2 carries the post-translational modification N-acetylserine.

This sequence belongs to the prefoldin subunit beta family. As to quaternary structure, heterohexamer of two PFD-alpha type and four PFD-beta type subunits.

It is found in the cytoplasm. Its function is as follows. Binds specifically to cytosolic chaperonin (c-CPN) and transfers target proteins to it. Binds to nascent polypeptide chain and promotes folding in an environment in which there are many competing pathways for nonnative proteins. This is Prefoldin subunit 1 (PFD1) from Saccharomyces cerevisiae (strain ATCC 204508 / S288c) (Baker's yeast).